The sequence spans 293 residues: Phosphate import ATP-binding protein PstB (293 aa).

In terms of domain architecture, ABC transporter spans 46–288 (MTCRKVDVHY…PGHQLTEDYI (243 aa)). 78-85 (GPSGCGKS) is a binding site for ATP.

The protein belongs to the ABC transporter superfamily. Phosphate importer (TC 3.A.1.7) family. In terms of assembly, the complex is composed of two ATP-binding proteins (PstB), two transmembrane proteins (PstC and PstA) and a solute-binding protein (PstS).

It is found in the cell inner membrane. The catalysed reaction is phosphate(out) + ATP + H2O = ADP + 2 phosphate(in) + H(+). Part of the ABC transporter complex PstSACB involved in phosphate import. Responsible for energy coupling to the transport system. This chain is Phosphate import ATP-binding protein PstB, found in Desulfotalea psychrophila (strain LSv54 / DSM 12343).